The sequence spans 131 residues: Small ribosomal subunit protein uS12 (131 aa).

Aspartate 89 carries the post-translational modification 3-methylthioaspartic acid.

This sequence belongs to the universal ribosomal protein uS12 family. As to quaternary structure, part of the 30S ribosomal subunit. Contacts proteins S8 and S17. May interact with IF1 in the 30S initiation complex.

Functionally, with S4 and S5 plays an important role in translational accuracy. Interacts with and stabilizes bases of the 16S rRNA that are involved in tRNA selection in the A site and with the mRNA backbone. Located at the interface of the 30S and 50S subunits, it traverses the body of the 30S subunit contacting proteins on the other side and probably holding the rRNA structure together. The combined cluster of proteins S8, S12 and S17 appears to hold together the shoulder and platform of the 30S subunit. The polypeptide is Small ribosomal subunit protein uS12 (Karelsulcia muelleri (strain GWSS) (Sulcia muelleri)).